The primary structure comprises 421 residues: Forkhead box protein J1 (421 aa).

2 disordered regions span residues 1-32 (MAES…LDDS) and 77-110 (ADPA…PPPD). Over residues 11-21 (AGPGEEAGPEG) the composition is skewed to gly residues. Residues 90 to 99 (KPTSSCTSRS) are compositionally biased toward polar residues. Positions 120–210 (VKPPYSYATL…YAERLLSGAF (91 aa)) form a DNA-binding region, fork-head.

Belongs to the FOXJ1 family. Predominantly expressed in tissues containing motile cilia.

The protein resides in the nucleus. Its function is as follows. Transcription factor specifically required for the formation of motile cilia. Acts by activating transcription of genes that mediate assembly of motile cilia, such as CFAP157. Binds the DNA consensus sequences 5'-HWDTGTTTGTTTA-3' or 5'-KTTTGTTGTTKTW-3' (where H is not G, W is A or T, D is not C, and K is G or T). Activates the transcription of a variety of ciliary proteins in the developing brain and lung. This Mus musculus (Mouse) protein is Forkhead box protein J1.